A 202-amino-acid polypeptide reads, in one-letter code: tRNA (pseudouridine(54)-N(1))-methyltransferase (202 aa).

3 residues coordinate S-adenosyl-L-methionine: L130, G152, and C185.

The protein belongs to the methyltransferase superfamily. TrmY family. As to quaternary structure, homodimer.

The protein resides in the cytoplasm. It carries out the reaction pseudouridine(54) in tRNA + S-adenosyl-L-methionine = N(1)-methylpseudouridine(54) in tRNA + S-adenosyl-L-homocysteine + H(+). Specifically catalyzes the N1-methylation of pseudouridine at position 54 (Psi54) in tRNAs. The sequence is that of tRNA (pseudouridine(54)-N(1))-methyltransferase from Methanococcoides burtonii (strain DSM 6242 / NBRC 107633 / OCM 468 / ACE-M).